The following is a 536-amino-acid chain: Multicopper oxidase terE (536 aa).

Residues 1 to 21 (MHWHGLSQSTAPFSDGSPQAS) are disordered. Plastocyanin-like domains follow at residues 1 to 67 (MHWH…VEEK), 79 to 238 (ERIL…LSYN), and 354 to 488 (TVQK…VWMM). Positions 2, 4, 48, and 50 each coordinate Cu cation. H397 provides a ligand contact to Cu cation.

It belongs to the multicopper oxidase family.

It participates in secondary metabolite biosynthesis. Its function is as follows. Multicopper oxidase; part of the gene cluster that mediates the biosynthesis of terrein, a fungal metabolite with ecological, antimicrobial, antiproliferative, and antioxidative activities. The first step in the pathway is performed by the polyketide synthase terA that produces 4-hydroxy-6-methylpyranon (4-HMP), orsellinic acid (OA), and 2,3-dehydro-6-hydroxymellein (2,3-dehydro-6-HM) by condensing acetyl-CoA with two, three, or four malonyl-CoA units, respectively. 4-HMP and OA are not pathway intermediates, but are rather shunt or side products. 2,3-dehydro-6-HM is further converted to 6-hydroxymellein (6-HM) by the 6-hydroxymellein synthase terB. The monooxygenases terC and terD, the multicopper oxidase terE and the Kelch-like protein terF are then involved in the transformation of 6-HM to terrein. Even if they are co-regulated with the other terrein cluster genes, terH and terI seem to be dispensable for terrein production; whereas one or both of the 2 transporters terG and terJ are probably required for efficient secretion of metabolites. The protein is Multicopper oxidase terE of Aspergillus terreus (strain NIH 2624 / FGSC A1156).